A 660-amino-acid chain; its full sequence is Oligopeptide-binding protein AliA (660 aa).

The signal sequence occupies residues 1–22 (MKSSKLFALAGVTLLAATTLAA). Residue C23 is the site of N-palmitoyl cysteine attachment. A lipid anchor (S-diacylglycerol cysteine) is attached at C23. The interval 638–660 (EKWMKEKEESNKKAQEDLAKHVK) is disordered.

The protein belongs to the bacterial solute-binding protein 5 family.

It is found in the cell membrane. Functionally, part of the binding-protein-dependent transport system for oligopeptides; probably an oligopeptide binding protein. In Streptococcus pneumoniae serotype 4 (strain ATCC BAA-334 / TIGR4), this protein is Oligopeptide-binding protein AliA (aliA).